A 994-amino-acid chain; its full sequence is Phosphoenolpyruvate carboxylase (994 aa).

The disordered stretch occupies residues 1-66; the sequence is MKSSGSARAT…QGRTREDKDR (66 aa). 2 stretches are compositionally biased toward low complexity: residues 14–25 and 41–54; these read AVSSSSAPAHAE and AAAR…AASA. Residues H204 and K646 contribute to the active site.

It belongs to the PEPCase type 1 family. Mg(2+) is required as a cofactor.

The catalysed reaction is oxaloacetate + phosphate = phosphoenolpyruvate + hydrogencarbonate. Forms oxaloacetate, a four-carbon dicarboxylic acid source for the tricarboxylic acid cycle. The protein is Phosphoenolpyruvate carboxylase of Burkholderia mallei (strain NCTC 10247).